A 37-amino-acid polypeptide reads, in one-letter code: Potassium channel toxin alpha-KTx 3.9 (37 aa).

3 disulfides stabilise this stretch: cysteine 7-cysteine 27, cysteine 13-cysteine 32, and cysteine 17-cysteine 34. The interaction with Ca(2+)-activated K(+) channels stretch occupies residues 25 to 32; the sequence is GKCMNRKC.

Belongs to the short scorpion toxin superfamily. Potassium channel inhibitor family. Alpha-KTx 03 subfamily. In terms of tissue distribution, expressed by the venom gland.

It localises to the secreted. In terms of biological role, binds and inhibits potassium channels. Intracerebroventricular injection into mice induces paralyzing symptoms followed by death. Its binding affinity to rat brain synaptosomes is 5-fold lower than this of KTX 1. This chain is Potassium channel toxin alpha-KTx 3.9 (KTX3), found in Buthus occitanus tunetanus (Common European scorpion).